Consider the following 318-residue polypeptide: Glutathione synthetase (318 aa).

Residues 133–317 (KMYALQFTSV…LGQQVMAWLF (185 aa)) form the ATP-grasp domain. 159-215 (VQQQGMAVLKPLGGKGGEGILFLQAGDRNLNSMIEISTQRGQLPVMLQEYLPAAKEG) contributes to the ATP binding site. The Mg(2+) site is built by E288 and N290.

The protein belongs to the prokaryotic GSH synthase family. The cofactor is Mg(2+). Mn(2+) serves as cofactor.

It carries out the reaction gamma-L-glutamyl-L-cysteine + glycine + ATP = glutathione + ADP + phosphate + H(+). It participates in sulfur metabolism; glutathione biosynthesis; glutathione from L-cysteine and L-glutamate: step 2/2. This chain is Glutathione synthetase, found in Thermosynechococcus vestitus (strain NIES-2133 / IAM M-273 / BP-1).